We begin with the raw amino-acid sequence, 252 residues long: Transmembrane ascorbate-dependent reductase CYB561 (252 aa).

N-acetylmethionine is present on Met-1. Topologically, residues 1–17 (MESPAGRTPAPGALPYY) are cytoplasmic. The helical transmembrane segment at 18–38 (VAFSQLLGLTVVAVTGAWLGA) threads the bilayer. Residues 20 to 221 (FSQLLGLTVV…FGAVVLYILT (202 aa)) enclose the Cytochrome b561 domain. The Vesicular segment spans residues 39-52 (YRGGIAWESALQFN). A helical transmembrane segment spans residues 53–73 (VHPLCMIIGLVFLQGDALLVY). Heme b contacts are provided by His-54, Arg-74, and Lys-81. Topologically, residues 74–85 (RVFRNEAKRTTK) are cytoplasmic. L-ascorbate-binding residues include Lys-81 and Lys-85. The helical transmembrane segment at 86 to 106 (ILHGLLHVLAFVIALVGLVAV) threads the bilayer. Heme b-binding positions include His-88, 117-120 (DLYS), and His-122. The Vesicular segment spans residues 107-125 (FDYHRKKGIADLYSLHSWC). The chain crosses the membrane as a helical span at residues 126–146 (GILVFVLFLAQWLVGLGFFLF). The Cytoplasmic segment spans residues 147-159 (PGASFSLRSRYRP). Arg-154 contacts L-ascorbate. The chain crosses the membrane as a helical span at residues 160 to 180 (QHVFFGAAIFLLSVGTALLGL). Heme b-binding residues include His-161 and Glu-182. Over 181-199 (KEALLFQLGTKYSAFESEG) the chain is Vesicular. The helical transmembrane segment at 200–220 (VLANVLGLLLVAFGAVVLYIL) threads the bilayer. Topologically, residues 221–252 (TRADWKRPLQAEEQALSMDFKTLTEGDSPSSQ) are cytoplasmic. Lys-226 is a heme b binding site. 2 positions are modified to phosphoserine: Ser-248 and Ser-250.

Heme b is required as a cofactor.

The protein resides in the cytoplasmic vesicle. Its subcellular location is the secretory vesicle. The protein localises to the chromaffin granule membrane. The enzyme catalyses monodehydro-L-ascorbate radical(out) + L-ascorbate(in) = monodehydro-L-ascorbate radical(in) + L-ascorbate(out). Functionally, transmembrane reductase that uses ascorbate as an electron donor in the cytoplasm and transfers electrons across membranes to reduce monodehydro-L-ascorbate radical in the lumen of secretory vesicles. It is therefore involved the regeneration and homeostasis within secretory vesicles of ascorbate which in turn provides reducing equivalents needed to support the activity of intravesicular enzymes. The sequence is that of Transmembrane ascorbate-dependent reductase CYB561 (CYB561) from Sus scrofa (Pig).